The following is a 210-amino-acid chain: Thymidylate kinase (210 aa).

Glycine 10–serine 17 lines the ATP pocket.

This sequence belongs to the thymidylate kinase family.

The catalysed reaction is dTMP + ATP = dTDP + ADP. Functionally, phosphorylation of dTMP to form dTDP in both de novo and salvage pathways of dTTP synthesis. The polypeptide is Thymidylate kinase (Pseudomonas fluorescens (strain SBW25)).